A 696-amino-acid chain; its full sequence is Iron-sulfur clusters transporter ATM1, mitochondrial (696 aa).

The N-terminal 67 residues, 1 to 67, are a transit peptide targeting the mitochondrion; sequence MIKWGLFGAV…RFFSSSHKLG (67 aa). The Mitochondrial matrix portion of the chain corresponds to 68 to 109; it reads VNTKEDSSTYLFGRKISTSESKMLKSLLVTIWPKNKPSFKLR. Residues 110 to 131 traverse the membrane as a helical segment; sequence VIFALSLLIASKLLNVEVPFFF. The ABC transmembrane type-1 domain occupies 110–400; that stretch reads VIFALSLLIA…LGSVYRELKQ (291 aa). Topologically, residues 132–154 are mitochondrial intermembrane; that stretch reads KKIIDEMNVDWNDQLGTVGTVIG. A helical transmembrane segment spans residues 155–178; the sequence is TLIIAYGGARFGAVLFGELRNAVF. Topologically, residues 179–227 are mitochondrial matrix; that stretch reads ASVAQTAIKRVAHNTFVHLLNMDLNFHLSRQTGGLTRAIDRGTKGISYV. The helical transmembrane segment at 228–251 threads the bilayer; that stretch reads LNAMVFHIIPISFEISMVCGILIY. Position 252 (Asn252) is a topological domain, mitochondrial intermembrane. A helical transmembrane segment spans residues 253-273; sequence YGLSFAAVTLATMLSYSVFTI. At 274-339 the chain is on the mitochondrial matrix side; that stretch reads KTTAWRTGFR…ASVKVATSLA (66 aa). Glutathione-binding positions include 279 to 283 and 342 to 345; these read RTGFR and NAGQ. A helical membrane pass occupies residues 340-358; sequence YLNAGQNFIFTSALTAMMY. Residues 359 to 373 are Mitochondrial intermembrane-facing; the sequence is MGCNGVATGSLTVGD. Residues 374–395 traverse the membrane as a helical segment; the sequence is LVLINQLVFQLSVPLSFLGSVY. Gly392 provides a ligand contact to glutathione. The Mitochondrial matrix segment spans residues 396–696; it reads RELKQSLLDM…EYAKETEEQK (301 aa). One can recognise an ABC transporter domain in the interval 438–674; sequence IKFENVTFGY…PNSLYSQLWN (237 aa). ATP contacts are provided by residues Tyr447 and 471–482; that span reads GPSGSGKSTILR.

It belongs to the ABC transporter superfamily. ABCB family. Heavy Metal importer (TC 3.A.1.210) subfamily. As to quaternary structure, homodimer.

It localises to the mitochondrion inner membrane. In terms of biological role, performs an essential function in the generation of cytoplasmic iron-sulfur proteins by mediating the ATP-dependent export of Fe/S cluster precursors synthesized by NFS1 and other mitochondrial proteins. Hydrolyzes ATP. Binds glutathione and may function by transporting a glutathione-conjugated iron-sulfur compound. This Debaryomyces hansenii (strain ATCC 36239 / CBS 767 / BCRC 21394 / JCM 1990 / NBRC 0083 / IGC 2968) (Yeast) protein is Iron-sulfur clusters transporter ATM1, mitochondrial.